The following is an 88-amino-acid chain: MTDKKLVKELAIEFGGSEKNVGAIEVQIAILTHDIERLKIHFETNKKDKHSKRGFIAKINKRKKLLAYLKDVNFESYQTTIQKLKIRK.

Belongs to the universal ribosomal protein uS15 family. As to quaternary structure, part of the 30S ribosomal subunit. Forms a bridge to the 50S subunit in the 70S ribosome, contacting the 23S rRNA.

Functionally, one of the primary rRNA binding proteins, it binds directly to 16S rRNA where it helps nucleate assembly of the platform of the 30S subunit by binding and bridging several RNA helices of the 16S rRNA. In terms of biological role, forms an intersubunit bridge (bridge B4) with the 23S rRNA of the 50S subunit in the ribosome. This chain is Small ribosomal subunit protein uS15, found in Mycoplasmopsis pulmonis (strain UAB CTIP) (Mycoplasma pulmonis).